Consider the following 537-residue polypeptide: Beta-arabinofuranosyltransferase RAY1 (537 aa).

The DXD motif signature appears at Asp370–Asp372.

This sequence belongs to the glycosyltransferase 77 family.

Beta-arabinofuranosyltransferase that transfers specifically an arabinosyl residue from UDP-arabinofuranose to the monosaccharide galactose or beta-methyl-galactoside in vitro. Catalyzes the addition of a beta-arabinofuranose residue onto a beta-galactosyl residue of an Yariv-precipitable wall polymer in vivo. The chain is Beta-arabinofuranosyltransferase RAY1 from Arabidopsis thaliana (Mouse-ear cress).